The following is a 64-amino-acid chain: Large ribosomal subunit protein bL35c (64 aa).

The protein belongs to the bacterial ribosomal protein bL35 family.

The protein localises to the plastid. It localises to the chloroplast. This Trieres chinensis (Marine centric diatom) protein is Large ribosomal subunit protein bL35c.